The chain runs to 158 residues: Probable inactive acireductone dioxygenase 2 (158 aa).

It belongs to the acireductone dioxygenase (ARD) family.

The protein localises to the cytoplasm. It is found in the nucleus. Its function is as follows. Probable inactive acireductone dioxygenase. The protein is Probable inactive acireductone dioxygenase 2 of Caenorhabditis elegans.